A 314-amino-acid chain; its full sequence is MDAYLHCLSHTPLVGFVDPEQAVLDEVNGVIADARRRISAFEPELVVLFAPDHYNGFFYDVMPPFCLGVGATAIGDFASAAGDLPVPTELAEACAHAVINSGIDLAVSYNMQVDHGFAQPLEFLLGGLDRVPVLPVFINGVAAPLPGFQRTRLLGEAMGRFLNTLNKRVLILGSGGLSHQPPVPELAKADAHLRDRLLGSGKQLPPDERERRQQRVINAARRFTEDQRSLHPLNPVWDNRFMSLLEQGRLAELDAIGNDELSAMAGKSTHEIKTWVAAFAALSAFGCWRSEGRYYRPIPEWIAGFGSLSATTEI.

His115 serves as the catalytic Proton donor. The active-site Proton acceptor is His179.

The protein belongs to the LigB/MhpB extradiol dioxygenase family. As to quaternary structure, homotetramer. Requires Fe(2+) as cofactor.

It catalyses the reaction 3-(2,3-dihydroxyphenyl)propanoate + O2 = (2Z,4E)-2-hydroxy-6-oxonona-2,4-dienedioate + H(+). The enzyme catalyses (2E)-3-(2,3-dihydroxyphenyl)prop-2-enoate + O2 = (2Z,4E,7E)-2-hydroxy-6-oxonona-2,4,7-trienedioate + H(+). The protein operates within aromatic compound metabolism; 3-phenylpropanoate degradation. Functionally, catalyzes the non-heme iron(II)-dependent oxidative cleavage of 2,3-dihydroxyphenylpropionic acid and 2,3-dihydroxicinnamic acid into 2-hydroxy-6-ketononadienedioate and 2-hydroxy-6-ketononatrienedioate, respectively. This Klebsiella pneumoniae (strain 342) protein is 2,3-dihydroxyphenylpropionate/2,3-dihydroxicinnamic acid 1,2-dioxygenase.